A 413-amino-acid polypeptide reads, in one-letter code: Transforming growth factor beta-2 proprotein (413 aa).

An N-terminal signal peptide occupies residues M1–L19. N72, N140, and N241 each carry an N-linked (GlcNAc...) asparagine glycan. Disulfide bonds link C308–C317, C316–C379, C345–C410, and C349–C412.

It belongs to the TGF-beta family. In terms of assembly, interacts with Transforming growth factor beta-2 (TGF-beta-2) chain; interaction is non-covalent and maintains (TGF-beta-2) in a latent state. Homodimer; disulfide-linked. Interacts with TGF-beta receptors (tgfbr1 and tgfbr2), leading to signal transduction. Post-translationally, the precursor proprotein is cleaved in the Golgi apparatus to form Transforming growth factor beta-2 (TGF-beta-2) and Latency-associated peptide (LAP) chains, which remain non-covalently linked, rendering TGF-beta-2 inactive.

It is found in the secreted. The protein resides in the extracellular space. It localises to the extracellular matrix. In terms of biological role, precursor of the Latency-associated peptide (LAP) and Transforming growth factor beta-2 (TGF-beta-2) chains, which constitute the regulatory and active subunit of TGF-beta-2, respectively. Required to maintain the Transforming growth factor beta-2 (TGF-beta-2) chain in a latent state during storage in extracellular matrix. Associates non-covalently with TGF-beta-2 and regulates its activation via interaction with 'milieu molecules', such as ltbp1 and lrrc32/garp, that control activation of TGF-beta-2. Functionally, multifunctional protein that regulates various processes such as angiogenesis and heart development. Activation into mature form follows different steps: following cleavage of the proprotein in the Golgi apparatus, Latency-associated peptide (LAP) and Transforming growth factor beta-2 (TGF-beta-2) chains remain non-covalently linked rendering TGF-beta-2 inactive during storage in extracellular matrix. At the same time, LAP chain interacts with 'milieu molecules', such as ltbp1 and lrrc32/garp, that control activation of TGF-beta-2 and maintain it in a latent state during storage in extracellular milieus. Once activated following release of LAP, TGF-beta-2 acts by binding to TGF-beta receptors (tgfbr1 and tgfbr2), which transduce signal. This is Transforming growth factor beta-2 proprotein (tgfb2) from Xenopus laevis (African clawed frog).